The primary structure comprises 296 residues: Giardin subunit alpha-2 (296 aa).

4 Annexin repeats span residues 2–71 (PKLS…MDLF), 73–143 (DRHE…MEKW), 153–223 (GSPD…AHFA), and 226–293 (GMHK…TLWR).

Belongs to the annexin family. Giardin subunit alpha subfamily.

Its subcellular location is the cytoplasm. The protein localises to the cytoskeleton. In terms of biological role, giardins are involved in parasite attachment to the intestinal mucosa and in the cytoskeletal disassembly and reassembly that marks the transition from infectious trophozoite to transmissible cyst. They may interact with other cytoskeletal proteins such as microtubules in the microribbons or crossbridges, to maintain the integrity of the ventral disk. The polypeptide is Giardin subunit alpha-2 (Giardia intestinalis (Giardia lamblia)).